Here is an 800-residue protein sequence, read N- to C-terminus: DNA topoisomerase 4 subunit A (800 aa).

A Topo IIA-type catalytic domain is found at 31–496 (LPDVRDGLKP…ISEIKIDKEV (466 aa)). Y119 acts as the O-(5'-phospho-DNA)-tyrosine intermediate in catalysis.

The protein belongs to the type II topoisomerase GyrA/ParC subunit family. ParC type 2 subfamily. Heterotetramer composed of ParC and ParE.

Its subcellular location is the cell membrane. The enzyme catalyses ATP-dependent breakage, passage and rejoining of double-stranded DNA.. Functionally, topoisomerase IV is essential for chromosome segregation. It relaxes supercoiled DNA. Performs the decatenation events required during the replication of a circular DNA molecule. The protein is DNA topoisomerase 4 subunit A of Staphylococcus epidermidis (strain ATCC 12228 / FDA PCI 1200).